We begin with the raw amino-acid sequence, 224 residues long: TBP-related factor (224 aa).

The interval 14–34 (RDNVAATSNAAANPHAALQPQ) is disordered. Low complexity predominate over residues 17–34 (VAATSNAAANPHAALQPQ). 2 repeat units span residues 51–127 (LQNI…ARIL) and 141–218 (LQNI…SPIL).

This sequence belongs to the TBP family. Primary spermatocytes in the adult testis and in a subset of cells in the dorsal medial region of the embryonic CNS.

The protein localises to the nucleus. Its function is as follows. Acts as a transcription factor. Binds to the TATA box promoter element which lies close to the position of transcription initiation. May be essential for embryonic development. The sequence is that of TBP-related factor (Trf) from Drosophila melanogaster (Fruit fly).